We begin with the raw amino-acid sequence, 396 residues long: Acetyl-CoA acetyltransferase (396 aa).

Cysteine 88 serves as the catalytic Acyl-thioester intermediate. Active-site proton acceptor residues include histidine 352 and cysteine 382.

Belongs to the thiolase-like superfamily. Thiolase family. Homotetramer.

It catalyses the reaction 2 acetyl-CoA = acetoacetyl-CoA + CoA. It functions in the pathway biopolymer metabolism; poly-(R)-3-hydroxybutanoate biosynthesis. In terms of biological role, when expressed in E.coli with Synechocystis PhaB, PhaC and PhaE confers the ability to synthesize up to 12% (w/w) poly(3-hydroxybutyrate) (PHB) depending on the carbon source. This is Acetyl-CoA acetyltransferase from Synechocystis sp. (strain ATCC 27184 / PCC 6803 / Kazusa).